Here is a 485-residue protein sequence, read N- to C-terminus: Cobyric acid synthase (485 aa).

The 188-residue stretch at 248–435 folds into the GATase cobBQ-type domain; that stretch reads VLKVVVPVLP…LHGLFESPDA (188 aa). Cys-329 (nucleophile) is an active-site residue. Residue His-427 is part of the active site.

It belongs to the CobB/CobQ family. CobQ subfamily.

Its pathway is cofactor biosynthesis; adenosylcobalamin biosynthesis. Its function is as follows. Catalyzes amidations at positions B, D, E, and G on adenosylcobyrinic A,C-diamide. NH(2) groups are provided by glutamine, and one molecule of ATP is hydrogenolyzed for each amidation. In Stutzerimonas stutzeri (strain A1501) (Pseudomonas stutzeri), this protein is Cobyric acid synthase.